Consider the following 545-residue polypeptide: GMP synthase [glutamine-hydrolyzing] (545 aa).

In terms of domain architecture, Glutamine amidotransferase type-1 spans 17-211 (TVLVLDMGSQ…ATKICGARPD (195 aa)). Cys-93 functions as the Nucleophile in the catalytic mechanism. Residues His-185 and Glu-187 contribute to the active site. The 209-residue stretch at 212–420 (WKMDDFSARE…LGIHEELIGR (209 aa)) folds into the GMPS ATP-PPase domain. 240 to 246 (SGGVDST) is a binding site for ATP. Positions 313, 482, 537, and 543 each coordinate XMP.

In terms of assembly, homodimer. Mg(2+) is required as a cofactor.

The protein localises to the cytoplasm. It localises to the cytosol. It carries out the reaction XMP + L-glutamine + ATP + H2O = GMP + L-glutamate + AMP + diphosphate + 2 H(+). It participates in purine metabolism; GMP biosynthesis; GMP from XMP (L-Gln route): step 1/1. Functionally, catalyzes the conversion of xanthine monophosphate (XMP) to GMP in the presence of glutamine and ATP through an adenyl-XMP intermediate. This chain is GMP synthase [glutamine-hydrolyzing] (GUA1), found in Gibberella zeae (strain ATCC MYA-4620 / CBS 123657 / FGSC 9075 / NRRL 31084 / PH-1) (Wheat head blight fungus).